The chain runs to 80 residues: Cytochrome c oxidase subunit 7A1, mitochondrial (80 aa).

The N-terminal 21 residues, 1 to 21, are a transit peptide targeting the mitochondrion; it reads MRALRVSQALVRSFSSTARNR. The Mitochondrial matrix segment spans residues 22-46; it reads FENRVAEKQKLFQEDNGLPVHLKGG. A helical transmembrane segment spans residues 47 to 75; the sequence is ATDNILYRVTMTLCLGGTLYSLYCLGWAS. Residues 76 to 80 are Mitochondrial intermembrane-facing; it reads FPHKK.

It belongs to the cytochrome c oxidase VIIa family. Component of the complex IV (CIV, cytochrome c oxidase), a multisubunit enzyme composed of 14 subunits. The complex is composed of a catalytic core of 3 subunits MT-CO1, MT-CO2 and MT-CO3, encoded in the mitochondrial DNA, and 11 supernumerary subunits COX4I1 (or COX4I2), COX5A, COX5B, COX6A2 (or COX6A1), COX6B1 (or COX6B2), COX6C, COX7A1 (or COX7A2), COX7B, COX7C, COX8B and NDUFA4, which are encoded in the nuclear genome. The complex exists as a monomer or a dimer and forms supercomplexes (SCs) in the inner mitochondrial membrane with NADH-ubiquinone oxidoreductase (complex I, CI) and ubiquinol-cytochrome c oxidoreductase (cytochrome b-c1 complex, complex III, CIII), resulting in different assemblies (supercomplex SCI(1)III(2)IV(1) and megacomplex MCI(2)III(2)IV(2)).

The protein resides in the mitochondrion inner membrane. Its pathway is energy metabolism; oxidative phosphorylation. In terms of biological role, component of the mitochondrial respiratory complex IV (CIV, also named cytochrome c oxidase complex), the last enzyme in the mitochondrial electron transport chain which drives oxidative phosphorylation. The CIV complex is the component of the respiratory chain that catalyzes the reduction of oxygen to water. Acts as an assembly factor that specifically drives the homodimerization of CIV complexes, mediating the formation of mitochondrial respiratory supercomplexes (respirasomes) containing two CIV: supercomplxes with two molecules of CIV show improved activity. Despite being highly expressed in brown adipose tissue, not required for thermogenesis. In Bos taurus (Bovine), this protein is Cytochrome c oxidase subunit 7A1, mitochondrial (COX7A1).